A 612-amino-acid polypeptide reads, in one-letter code: Phosphopentomutase (612 aa).

Residue A2 is modified to N-acetylalanine. Residues R63 and S165 each contribute to the alpha-D-glucose 1,6-bisphosphate site. S165 acts as the Phosphoserine intermediate in catalysis. The Mg(2+) site is built by S165, D322, D324, and D326. Phosphoserine is present on S165. Alpha-D-glucose 1,6-bisphosphate-binding residues include D326, R327, T400, E424, and K438.

The protein belongs to the phosphohexose mutase family. In terms of assembly, monomer. The cofactor is Mg(2+).

The protein localises to the cytoplasm. It is found in the cytosol. It catalyses the reaction alpha-D-ribose 1-phosphate = D-ribose 5-phosphate. The catalysed reaction is 2-deoxy-alpha-D-ribose 1-phosphate = 2-deoxy-D-ribose 5-phosphate. It carries out the reaction alpha-D-glucose 1-phosphate = alpha-D-glucose 6-phosphate. The enzyme catalyses O-phospho-L-seryl-[protein] + alpha-D-glucose 1-phosphate = alpha-D-glucose 1,6-bisphosphate + L-seryl-[protein]. It catalyses the reaction alpha-D-glucose 1,6-bisphosphate + L-seryl-[protein] = O-phospho-L-seryl-[protein] + alpha-D-glucose 6-phosphate. The phosphomutase activity is stimulated by glucose 1,6-bisphosphate. Functionally, catalyzes the conversion of the nucleoside breakdown products ribose-1-phosphate and deoxyribose-1-phosphate to the corresponding 5-phosphopentoses. Catalyzes the reversible isomerization of alpha-D-glucose 1-phosphate to alpha-D-glucose 6-phosphate but with a lower catalytic efficiency. The mechanism proceeds via the intermediate compound alpha-D-glucose 1,6-bisphosphate. In vitro, also has a low glucose 1,6-bisphosphate synthase activity which is most probably not physiologically relevant. The chain is Phosphopentomutase from Homo sapiens (Human).